We begin with the raw amino-acid sequence, 92 residues long: Small ribosomal subunit protein uS19 (92 aa).

It belongs to the universal ribosomal protein uS19 family.

Protein S19 forms a complex with S13 that binds strongly to the 16S ribosomal RNA. The protein is Small ribosomal subunit protein uS19 of Borrelia hermsii (strain HS1 / DAH).